A 471-amino-acid polypeptide reads, in one-letter code: MTAKRAIGRHESLADKVHRHRGLLLVISIPIVLIALVLLLMPGTSTSVSVIEYTMKNHEGGSNSRGPKNYAVIFDAGSSGSRVHVYCFDQNLDLVPLENELELFLQLKPGLSAYPNDPRQSANSLVTLLDKAEASVPRELRPKTPVRVGATAGLRALGHQASENILQAVRELLKGRSRLKTEANAVTVLDGTQEGSYQWVTINYLLRTLGKPYSDTVGVVDLGGGSVQMAYAIPEEDAATAPKPVEGEDSYVREMYLKGRKYFLYVHSYLHYGLLAARAEILKVSEDSNNPCIATGYAGTYKYGGKAFKAAASPSGASLDECRRVAINALKVNNSLCTHMKCTFGGVWNGGGGGGQKKMFVASFFFDRAAEAGFVDPNQPVAEVRPLDFEKAANKACNMRMEEGKSKFPRVEEDNLPYLCLDLVYQYTLLVDGFGLKPSQTITLVKKVKYGDYAVEAAWPLGSAIEAVSSP.

The Cytoplasmic segment spans residues 1–21 (MTAKRAIGRHESLADKVHRHR). A helical; Signal-anchor for type II membrane protein transmembrane segment spans residues 22 to 42 (GLLLVISIPIVLIALVLLLMP). The Lumenal portion of the chain corresponds to 43–471 (GTSTSVSVIE…GSAIEAVSSP (429 aa)). Position 72 to 82 (72 to 82 (VIFDAGSSGSR)) interacts with ATP. Glutamate 194 functions as the Proton acceptor in the catalytic mechanism. 218–228 (GVVDLGGGSVQ) is an ATP binding site. N-linked (GlcNAc...) asparagine glycosylation occurs at asparagine 333.

Belongs to the GDA1/CD39 NTPase family. Ca(2+) serves as cofactor. In terms of tissue distribution, expressed in roots, root hairs, root cap, leaves, stems, trichomes, phloem throughout the plant, guard cells, filaments of young stamens, stipules, papillae of stigmas, pollen, pollen tubes and the abscission zone of siliques.

It is found in the golgi apparatus membrane. It localises to the membrane. It catalyses the reaction a ribonucleoside 5'-triphosphate + 2 H2O = a ribonucleoside 5'-phosphate + 2 phosphate + 2 H(+). Its function is as follows. Catalyzes the hydrolysis of phosphoanhydride bonds of nucleoside tri- and di-phosphates. Substrate preference is ATP &gt; ADP. Functions with APY2 to reduce extracellular ATP level which is essential for pollen germination and normal plant development. Plays a role in the regulation of stomatal function by modulating extracellular ATP levels in guard cells. The polypeptide is Apyrase 1 (APY1) (Arabidopsis thaliana (Mouse-ear cress)).